Here is an 80-residue protein sequence, read N- to C-terminus: Exodeoxyribonuclease 7 small subunit (80 aa).

This sequence belongs to the XseB family. Heterooligomer composed of large and small subunits.

It is found in the cytoplasm. The enzyme catalyses Exonucleolytic cleavage in either 5'- to 3'- or 3'- to 5'-direction to yield nucleoside 5'-phosphates.. Its function is as follows. Bidirectionally degrades single-stranded DNA into large acid-insoluble oligonucleotides, which are then degraded further into small acid-soluble oligonucleotides. In Aliivibrio fischeri (strain ATCC 700601 / ES114) (Vibrio fischeri), this protein is Exodeoxyribonuclease 7 small subunit.